A 291-amino-acid polypeptide reads, in one-letter code: Elongation factor Ts (291 aa).

The involved in Mg(2+) ion dislocation from EF-Tu stretch occupies residues 80-83 (TDFV).

This sequence belongs to the EF-Ts family.

It is found in the cytoplasm. Associates with the EF-Tu.GDP complex and induces the exchange of GDP to GTP. It remains bound to the aminoacyl-tRNA.EF-Tu.GTP complex up to the GTP hydrolysis stage on the ribosome. In Limosilactobacillus reuteri (strain DSM 20016) (Lactobacillus reuteri), this protein is Elongation factor Ts.